Reading from the N-terminus, the 375-residue chain is Tyrosine--tRNA ligase (375 aa).

Tyrosine 37, tyrosine 168, glutamine 172, aspartate 175, and glutamine 190 together coordinate L-tyrosine. The short motif at 251–255 (KMSKS) is the 'KMSKS' region element. Lysine 254 contacts ATP.

Belongs to the class-I aminoacyl-tRNA synthetase family. TyrS type 4 subfamily. In terms of assembly, homodimer.

It localises to the cytoplasm. It catalyses the reaction tRNA(Tyr) + L-tyrosine + ATP = L-tyrosyl-tRNA(Tyr) + AMP + diphosphate + H(+). Catalyzes the attachment of tyrosine to tRNA(Tyr) in a two-step reaction: tyrosine is first activated by ATP to form Tyr-AMP and then transferred to the acceptor end of tRNA(Tyr). The sequence is that of Tyrosine--tRNA ligase from Thermococcus onnurineus (strain NA1).